The following is a 308-amino-acid chain: Uricase (308 aa).

Catalysis depends on charge relay system residues lysine 5 and threonine 65. The urate site is built by threonine 65, aspartate 66, phenylalanine 177, arginine 194, isoleucine 242, glutamine 243, and asparagine 269. Residues 283 to 308 are disordered; that stretch reads ASVLREPPAPTGFQQFSMDRGDLDEQ.

It belongs to the uricase family.

It carries out the reaction urate + O2 + H2O = 5-hydroxyisourate + H2O2. Its pathway is purine metabolism; urate degradation; (S)-allantoin from urate: step 1/3. Its function is as follows. Catalyzes the oxidation of uric acid to 5-hydroxyisourate, which is further processed to form (S)-allantoin. The polypeptide is Uricase (Haloferax volcanii (strain ATCC 29605 / DSM 3757 / JCM 8879 / NBRC 14742 / NCIMB 2012 / VKM B-1768 / DS2) (Halobacterium volcanii)).